Here is a 126-residue protein sequence, read N- to C-terminus: 3-aminobutyryl-CoA ammonia lyase (126 aa).

Belongs to the KAL family. In terms of assembly, homohexamer.

The enzyme catalyses (3S)-3-aminobutanoyl-CoA = (2E)-butenoyl-CoA + NH4(+). Its pathway is amino-acid degradation; L-lysine degradation via acetate pathway. In terms of biological role, involved in the anaerobic fermentation of lysine. Catalyzes the deamination of L-3-aminobutyryl-CoA to produce crotonoyl-CoA. The chain is 3-aminobutyryl-CoA ammonia lyase from Acetoanaerobium sticklandii (strain ATCC 12662 / DSM 519 / JCM 1433 / CCUG 9281 / NCIMB 10654 / HF) (Clostridium sticklandii).